The following is a 204-amino-acid chain: Flavin-dependent thymidylate synthase (204 aa).

The ThyX domain occupies 1–204 (MTVTLMQHTS…RYLFCLNQEG (204 aa)). Residues Ser-50 and 74–76 (RHR) each bind FAD. DUMP-binding positions include 71-74 (ELAR), 84-86 (SSR), and Lys-143. The ThyX motif motif lies at 74–84 (RHRIASLSVKS). FAD is bound by residues 159-161 (NAR) and Asn-165. Position 170 (Arg-170) interacts with dUMP. The active-site Involved in ionization of N3 of dUMP, leading to its activation is Arg-170.

Belongs to the thymidylate synthase ThyX family. In terms of assembly, homotetramer. FAD is required as a cofactor.

The catalysed reaction is dUMP + (6R)-5,10-methylene-5,6,7,8-tetrahydrofolate + NADPH + H(+) = dTMP + (6S)-5,6,7,8-tetrahydrofolate + NADP(+). Its pathway is pyrimidine metabolism; dTTP biosynthesis. Functionally, catalyzes the reductive methylation of 2'-deoxyuridine-5'-monophosphate (dUMP) to 2'-deoxythymidine-5'-monophosphate (dTMP) while utilizing 5,10-methylenetetrahydrofolate (mTHF) as the methyl donor, and NADPH and FADH(2) as the reductant. The polypeptide is Flavin-dependent thymidylate synthase (Wolinella succinogenes (strain ATCC 29543 / DSM 1740 / CCUG 13145 / JCM 31913 / LMG 7466 / NCTC 11488 / FDC 602W) (Vibrio succinogenes)).